Consider the following 339-residue polypeptide: Protein H339R (339 aa).

This sequence belongs to the asfivirus H339R family. As to quaternary structure, interacts with host NACA (alpha chain of nascent polypeptide-associated complex).

It localises to the host cytoplasm. It is found in the host nucleus. This African swine fever virus (isolate Tick/South Africa/Pretoriuskop Pr4/1996) (ASFV) protein is Protein H339R.